Reading from the N-terminus, the 217-residue chain is Thiamine-phosphate synthase (217 aa).

4-amino-2-methyl-5-(diphosphooxymethyl)pyrimidine-binding positions include glutamine 41–lysine 45 and asparagine 76. Mg(2+)-binding residues include aspartate 77 and aspartate 96. Residue serine 115 coordinates 4-amino-2-methyl-5-(diphosphooxymethyl)pyrimidine. Serine 142–serine 144 contacts 2-[(2R,5Z)-2-carboxy-4-methylthiazol-5(2H)-ylidene]ethyl phosphate. Lysine 145 provides a ligand contact to 4-amino-2-methyl-5-(diphosphooxymethyl)pyrimidine. 2-[(2R,5Z)-2-carboxy-4-methylthiazol-5(2H)-ylidene]ethyl phosphate contacts are provided by residues glycine 172 and isoleucine 192–serine 193.

It belongs to the thiamine-phosphate synthase family. Mg(2+) serves as cofactor.

It carries out the reaction 2-[(2R,5Z)-2-carboxy-4-methylthiazol-5(2H)-ylidene]ethyl phosphate + 4-amino-2-methyl-5-(diphosphooxymethyl)pyrimidine + 2 H(+) = thiamine phosphate + CO2 + diphosphate. The catalysed reaction is 2-(2-carboxy-4-methylthiazol-5-yl)ethyl phosphate + 4-amino-2-methyl-5-(diphosphooxymethyl)pyrimidine + 2 H(+) = thiamine phosphate + CO2 + diphosphate. It catalyses the reaction 4-methyl-5-(2-phosphooxyethyl)-thiazole + 4-amino-2-methyl-5-(diphosphooxymethyl)pyrimidine + H(+) = thiamine phosphate + diphosphate. Its pathway is cofactor biosynthesis; thiamine diphosphate biosynthesis; thiamine phosphate from 4-amino-2-methyl-5-diphosphomethylpyrimidine and 4-methyl-5-(2-phosphoethyl)-thiazole: step 1/1. Its function is as follows. Condenses 4-methyl-5-(beta-hydroxyethyl)thiazole monophosphate (THZ-P) and 2-methyl-4-amino-5-hydroxymethyl pyrimidine pyrophosphate (HMP-PP) to form thiamine monophosphate (TMP). This Acidithiobacillus ferrooxidans (strain ATCC 23270 / DSM 14882 / CIP 104768 / NCIMB 8455) (Ferrobacillus ferrooxidans (strain ATCC 23270)) protein is Thiamine-phosphate synthase.